The chain runs to 374 residues: MKFELDTTDGRARRGRLIFDRGTVETPAFMPVGTYGTVKGMTPEEVRATGADILLGNTFHLWLRPGEEIMRKHGDLHDFMNWQRPILTDSGGFQVFSLGDIRKITEEGVHFRSPINGEKIFLDPEKSMQIQDALGSDVVMIFDECTPYPATEDEARKSMQMSLRWARRSRDEFDRLENPNSLFGIIQGGVYEDLRDESLKGLVDIGFDGYAVGGLAVGEPKADMHRILEHICPQIPADKPRYLMGVGKPEDLVEGVRRGVDMFDCVMPTRNARNGHLFTSEGVIKIRNARHRDDTSPLDTKCDCYTCKNYSRAYLYHLDRCNEILGARLNTIHNLRYYQMLMEGLRGAIETGTLDAFVADFYTSQGREVPELVD.

D89 functions as the Proton acceptor in the catalytic mechanism. Substrate is bound by residues 89-93 (DSGGF), D143, Q187, and G214. The segment at 245-251 (GVGKPED) is RNA binding. D264 serves as the catalytic Nucleophile. Residues 269-273 (TRNAR) are RNA binding; important for wobble base 34 recognition. Zn(2+) is bound by residues C302, C304, C307, and H333.

It belongs to the queuine tRNA-ribosyltransferase family. As to quaternary structure, homodimer. Within each dimer, one monomer is responsible for RNA recognition and catalysis, while the other monomer binds to the replacement base PreQ1. It depends on Zn(2+) as a cofactor.

The catalysed reaction is 7-aminomethyl-7-carbaguanine + guanosine(34) in tRNA = 7-aminomethyl-7-carbaguanosine(34) in tRNA + guanine. Its pathway is tRNA modification; tRNA-queuosine biosynthesis. Functionally, catalyzes the base-exchange of a guanine (G) residue with the queuine precursor 7-aminomethyl-7-deazaguanine (PreQ1) at position 34 (anticodon wobble position) in tRNAs with GU(N) anticodons (tRNA-Asp, -Asn, -His and -Tyr). Catalysis occurs through a double-displacement mechanism. The nucleophile active site attacks the C1' of nucleotide 34 to detach the guanine base from the RNA, forming a covalent enzyme-RNA intermediate. The proton acceptor active site deprotonates the incoming PreQ1, allowing a nucleophilic attack on the C1' of the ribose to form the product. After dissociation, two additional enzymatic reactions on the tRNA convert PreQ1 to queuine (Q), resulting in the hypermodified nucleoside queuosine (7-(((4,5-cis-dihydroxy-2-cyclopenten-1-yl)amino)methyl)-7-deazaguanosine). The protein is Queuine tRNA-ribosyltransferase of Shewanella baltica (strain OS223).